Consider the following 66-residue polypeptide: Putative inactive (E)-beta-ocimene synthase, chloroplastic (66 aa).

A chloroplast-targeting transit peptide spans 1–25 (MAAHNLCFNSAFVCNVHHQKTQHFP).

Belongs to the terpene synthase family. Tpsb subfamily. In terms of tissue distribution, expressed exclusively in flowers.

It is found in the plastid. The protein resides in the chloroplast. This chain is Putative inactive (E)-beta-ocimene synthase, chloroplastic (TPS02), found in Arabidopsis thaliana (Mouse-ear cress).